A 150-amino-acid chain; its full sequence is MTFDDKKGLQVALDQAKKSYSEGGIPIGSCIISSDDTVLGQGHNERIQKHSAILHGEMSALENAGRLPGKTYKDCTIYTTLSPCSMCTGAILLYGFKRVVMGENVNFLGNEKLLIENGVEVVNLNDQECIDLMAKFIKEKPQDWNEDIGE.

Residues F3–V121 enclose the CMP/dCMP-type deaminase domain. N44 contributes to the substrate binding site. Residue H55 participates in Zn(2+) binding. E57 functions as the Proton donor in the catalytic mechanism. Residues C84 and C87 each contribute to the Zn(2+) site. D147 is a substrate binding site.

Belongs to the cytidine and deoxycytidylate deaminase family. In terms of assembly, homodimer. Zn(2+) serves as cofactor.

The protein resides in the cytoplasm. It localises to the nucleus. It catalyses the reaction cytosine + H2O + H(+) = uracil + NH4(+). It functions in the pathway pyrimidine metabolism; UMP biosynthesis via salvage pathway; uracil from cytosine: step 1/1. Its function is as follows. Catalyzes the hydrolytic deamination of cytosine to uracil or 5-methylcytosine to thymine. Is involved in the pyrimidine salvage pathway, which allows the cell to utilize cytosine for pyrimidine nucleotide synthesis. The sequence is that of Cytosine deaminase from Candida albicans (strain SC5314 / ATCC MYA-2876) (Yeast).